Reading from the N-terminus, the 352-residue chain is MPATTAETLSLVNRSVSVAPLVLLSVVDHYNRTQANKSKSKRVVGVLLGQNDGKNVRVSNSFAVPFEEDDKDPSVWFLDHNYVESMNDMFKKVNAREKLIGWYHSGPKLRASDLDINELFKRYTPNPLLVIVDVQPKETGVPTDAYFAVDEIKDDGTTTSKTFVHTPSIIEAEEAEEIGVEHLLRDIRDVAVGTLSTRITNQMRSLQGLHHRLRDIQAYLQKVLDGQLPVNHAILGNLQDVFNLLPNLSTPKSGPGATGTNADSELNHAMSIKTNDQLMAIYLSSLIRAITAFHDLIENKIQNRQQQEENDAKKKEGENGEKKEGADKKEGSPAAANGESKEKENSPKEKKK.

Positions 16-152 constitute an MPN domain; it reads VSVAPLVLLS…TDAYFAVDEI (137 aa). A disordered region spans residues 303–352; it reads NRQQQEENDAKKKEGENGEKKEGADKKEGSPAAANGESKEKENSPKEKKK. Composition is skewed to basic and acidic residues over residues 306 to 331 and 339 to 352; these read QQEE…KKEG and ESKE…EKKK.

Belongs to the peptidase M67A family.

Its function is as follows. Acts as a regulatory subunit of the 26S proteasome which is involved in the ATP-dependent degradation of ubiquitinated proteins. The polypeptide is 26S proteasome regulatory subunit rpn-8 (rpn-8) (Neurospora crassa (strain ATCC 24698 / 74-OR23-1A / CBS 708.71 / DSM 1257 / FGSC 987)).